We begin with the raw amino-acid sequence, 478 residues long: Septin-4 (478 aa).

Residues 38–115 (VKDFSGNESC…RSPWGKLDPY (78 aa)) are disordered. The span at 95-108 (APAPLSPSARPRSP) shows a compositional bias: low complexity. Residues Ser117 and Ser118 each carry the phosphoserine modification. The 274-residue stretch at 141–414 (KGFDFTLMVA…ENYRAQCIQS (274 aa)) folds into the Septin-type G domain. The G1 motif stretch occupies residues 151 to 158 (GESGLGKS). GTP is bound by residues 151 to 158 (GESGLGKS) and Thr185. A G3 motif region spans residues 208–211 (DTPG). Positions 289–292 (AKAD) are G4 motif. A GTP-binding site is contributed by 290-298 (KADTLTPPE). Ser325 bears the Phosphoserine mark. The GTP site is built by Gly348 and Arg363. The disordered stretch occupies residues 425-448 (RNKLTRESGTDLPIPAVPPGTDPE). Ser432 carries the post-translational modification Phosphoserine. The residue at position 434 (Thr434) is a Phosphothreonine. Residues 446–478 (DPETEKLIREKDEELRRMQEMLHKIQKQMKETY) adopt a coiled-coil conformation.

This sequence belongs to the TRAFAC class TrmE-Era-EngA-EngB-Septin-like GTPase superfamily. Septin GTPase family. As to quaternary structure, septins polymerize into heterooligomeric protein complexes that form filaments, and can associate with cellular membranes, actin filaments and microtubules. GTPase activity is required for filament formation. Interacts with SEPTIN8. Component of a septin core octameric complex consisting of SEPTIN12, SEPTIN7, SEPTIN6 and SEPTIN2 or SEPTIN4 in the order 12-7-6-2-2-6-7-12 or 12-7-6-4-4-6-7-12. Interacts with SEPTIN14 (via C-terminus). Interacts with DYRK1A. Interacts with SLC6A3/DAT and SNCA/alpha-synuclein. Interacts with STX1A; in the striatum. Interacts with XIAP (via BIR3 domain) following the induction of apoptosis. Interacts with AREL1 (via HECT domain); in the cytoplasm following induction of apoptosis. In terms of processing, ubiquitinated by AREL1. Post-translationally, phosphorylated by DYRK1A.

It is found in the cytoplasm. It localises to the cell projection. Its subcellular location is the cilium. The protein localises to the flagellum. The protein resides in the cytoplasmic vesicle. It is found in the secretory vesicle. It localises to the axon. Its subcellular location is the dendrite. The protein localises to the perikaryon. The protein resides in the synapse. In terms of biological role, filament-forming cytoskeletal GTPase. Pro-apoptotic protein involved in LGR5-positive intestinal stem cell and Paneth cell expansion in the intestines, via its interaction with XIAP. May also play a role in the regulation of cell fate in the intestine. Positive regulator of apoptosis involved in hematopoietic stem cell homeostasis; via its interaction with XIAP. Negative regulator of repair and hair follicle regeneration in response to injury, due to inhibition of hair follicle stem cell proliferation, potentially via its interaction with XIAP. Plays an important role in male fertility and sperm motility. During spermiogenesis, essential for the establishment of the annulus (a fibrous ring structure connecting the midpiece and the principal piece of the sperm flagellum) which is a requisite for the structural and mechanical integrity of the sperm. Involved in the migration of cortical neurons and the formation of neuron leading processes during embryonic development. Required for dopaminergic metabolism in presynaptic autoreceptors; potentially via activity as a presynaptic scaffold protein. In Pongo abelii (Sumatran orangutan), this protein is Septin-4.